Reading from the N-terminus, the 131-residue chain is MRHRHGLRKLNRTSEHRLAMLRNMANSLIQSEAIKTTVPKAKELRRVVEPLITLAKEPTLANRRLAFDRTRDRDVVAKLFNDLGPRYKARPGGYTRILKMGFRVGDNAPMAFVELVDRPEPAAQAPAEATE.

The protein belongs to the bacterial ribosomal protein bL17 family. Part of the 50S ribosomal subunit. Contacts protein L32.

The polypeptide is Large ribosomal subunit protein bL17 (Methylibium petroleiphilum (strain ATCC BAA-1232 / LMG 22953 / PM1)).